Consider the following 1510-residue polypeptide: Chromosome partition protein MukB (1510 aa).

Residue 75–82 (GGNGAGKS) participates in ATP binding. A coiled-coil region spans residues 346–706 (QHRLVDLSRE…LDEQISRLSQ (361 aa)). Residues 707 to 824 (PDGSEDPRLN…EIPLFGCAAR (118 aa)) are flexible hinge. Coiled coils occupy residues 825-1154 (EKRL…AAKV) and 1248-1304 (IDAI…LQNI).

The protein belongs to the SMC family. MukB subfamily. Homodimerization via its hinge domain. Binds to DNA via its C-terminal region. Interacts, and probably forms a ternary complex, with MukE and MukF via its C-terminal region. The complex formation is stimulated by calcium or magnesium. Interacts with tubulin-related protein FtsZ.

The protein resides in the cytoplasm. Its subcellular location is the nucleoid. In terms of biological role, plays a central role in chromosome condensation, segregation and cell cycle progression. Functions as a homodimer, which is essential for chromosome partition. Involved in negative DNA supercoiling in vivo, and by this means organize and compact chromosomes. May achieve or facilitate chromosome segregation by condensation DNA from both sides of a centrally located replisome during cell division. The sequence is that of Chromosome partition protein MukB from Haemophilus influenzae (strain ATCC 51907 / DSM 11121 / KW20 / Rd).